Here is a 909-residue protein sequence, read N- to C-terminus: MTTPSMQPQWAFMHIAGQDASQYLSPGVVQFAAATDTYFSLGNKFRNPTVAPTHDVTTDRSQRLTLRIVPVDREDSQYTYKTRFQLSVGDNRVLDMASTYFDIRGRLDRGPSFKPYSGTAYNSLAPRAAPNNLMFKTGADSKTMTIAQANIVGSTIDQDGLKINNVALNPNAGEPAVQEGLENWMEELQIGADKKFASRVLKADQPVLPNYGSYAYPTNINGTQTKDGTTVDKVYMCSKGANVQNPDVVLYSEEVNLQAPDTHLLDGPGADNPKDRVAFCAAPNRPNYIGFRDNFIGLMYYNSNGNQGVLAGQASQLNAVVDLQDRNTELSYQFLLDSLYDRSRYFSLWNQAIDSYDPRVRIIENDGVEDDITSFAFDLRGIGDLPYKQVQTHNGNQQSANTTDTCYIGKGNMAAMEINIPANLWLGFLYANVAQYMPDDFKVDPSNIQMPQDKTTYAYMNQRIAPAGLIETYVNVGGRWSVDFMDTVNPFNHHRNEGLKYRSQILGNGRFVDFHIQVPQKFFAIKSLLLLPGSYTYEWSFRKDVNMVLQSSLGNDLRADGARLEIHSVNLYASFFPMAHNTASTLEAMLRNETNDQTFLDYLSSATMMFPIPAGQTQVPVSIPARNWAAFRGWSFTRIKQQETPNIGSPYDPYFKYSGSIPFLDATFYLTHTFQRVSIMFDSSVSWPGNDRLLTPNEFEIKRHIDAEGLCVGQSNMTKDWFLVQMLSNYNIGYQGFYLPENNKDRTYSFVRNFEPLARQVVDDAAAANYRDVPLSKRFNNSGWRSAGPPIFAREGAPYPANWPYPLCGEAAWAAKTQRKFLVDRYMYRIPFSSNFMSMGALTDLGQNLLYANSAHSLEMTFNVDPMQEATFLYILFEVFDCVRIHQPHRGIIEAVYLRSPFSAGNATT.

Position 897 is a phosphotyrosine; by host (tyrosine 897).

Belongs to the adenoviridae hexon protein family. As to quaternary structure, homotrimer. Interacts with the capsid vertex protein; this interaction binds the peripentonal hexons to the neighboring penton base. Interacts with the hexon-linking protein; this interaction tethers the hexons surrounding the penton to those situated in the central plate of the facet. Interacts with the hexon-interlacing protein; this interaction lashes the hexons together. Interacts with host dyneins DYNC1LI1 and DYNC1I2; this interaction might be involved in intracellular microtubule-dependent transport of incoming viral capsid. Interacts with the shutoff protein; this interaction allows folding and formation of hexons trimers. Interacts with pre-protein VI; this interaction probably allows nuclear import of hexon trimers and possibly pre-capsid assembly.

It is found in the virion. The protein localises to the host nucleus. In terms of biological role, major capsid protein that self-associates to form 240 hexon trimers, each in the shape of a hexagon, building most of the pseudo T=25 capsid. Assembled into trimeric units with the help of the chaperone shutoff protein. Transported by pre-protein VI to the nucleus where it associates with other structural proteins to form an empty capsid. Might be involved, through its interaction with host dyneins, in the intracellular microtubule-dependent transport of incoming viral capsid to the nucleus. The protein is Hexon protein of Murine adenovirus A serotype 1 (MAdV-1).